Reading from the N-terminus, the 1241-residue chain is uncharacterized protein (1241 aa).

A coiled-coil region spans residues 21–49; the sequence is ILNDNVREINIAKKEIKQLREYVGILQQN. 3 consecutive transmembrane segments (helical) span residues 261–281, 918–938, and 947–967; these read VNAI…FVLG, AVVG…GLVA, and GHIV…VIGG. A disordered region spans residues 1005–1028; sequence THIGKEDSNNGVSTSTNKRSIGKA. Residues 1013 to 1028 show a composition bias toward polar residues; the sequence is NNGVSTSTNKRSIGKA.

The protein resides in the host membrane. This is an uncharacterized protein from Diadromus pulchellus (Parasitic wasp).